Consider the following 160-residue polypeptide: Transcription elongation factor GreA (160 aa).

The protein belongs to the GreA/GreB family.

Necessary for efficient RNA polymerase transcription elongation past template-encoded arresting sites. The arresting sites in DNA have the property of trapping a certain fraction of elongating RNA polymerases that pass through, resulting in locked ternary complexes. Cleavage of the nascent transcript by cleavage factors such as GreA or GreB allows the resumption of elongation from the new 3'terminus. GreA releases sequences of 2 to 3 nucleotides. In Francisella philomiragia subsp. philomiragia (strain ATCC 25017 / CCUG 19701 / FSC 153 / O#319-036), this protein is Transcription elongation factor GreA.